A 175-amino-acid polypeptide reads, in one-letter code: Ribosome maturation factor RimM (175 aa).

One can recognise a PRC barrel domain in the interval 96-175 (EGDFYWHDLI…TIEVDWDAGF (80 aa)).

Belongs to the RimM family. As to quaternary structure, binds ribosomal protein uS19.

The protein localises to the cytoplasm. Its function is as follows. An accessory protein needed during the final step in the assembly of 30S ribosomal subunit, possibly for assembly of the head region. Essential for efficient processing of 16S rRNA. May be needed both before and after RbfA during the maturation of 16S rRNA. It has affinity for free ribosomal 30S subunits but not for 70S ribosomes. The sequence is that of Ribosome maturation factor RimM from Histophilus somni (strain 129Pt) (Haemophilus somnus).